The following is a 371-amino-acid chain: MPHQQMLILFGLLPVATNISTWWNFGSMLLACSSMQVLTGFFLAVHYTANINLAFSSIVHITRDVPYGWMMQNLHAIGASMFFICIYIHIARGLYYGSYLNKKTWLSGTTLLIMLMVTAFFGXXXXXXXXXXXXXXXXXXXXXXXXXXXXXXXXXXXXXXXXXXXXXXXXXXXXXXXXXXXXXXXXXXXXXXXXXXXXXXXXXNSDIDKIPFHPYHTYKDLLMLSLMVLMLLMTVSFLPDIFNDPENFSKANPLVTPQHIKPEWYFLFAYGILRSIPNKLGGALALAMSIMILLTVPFTHTSTIRSMMFRPIMQLMFWTLVATFMVITWAATKPVEPPFTMISQIASTIYFLFFIMNPIAGWIENNIMKDN.

Helical transmembrane passes span 25–45 (FGSMLLACSSMQVLTGFFLAV), 69–90 (WMMQNLHAIGASMFFICIYIHI), 105–125 (WLSGTTLLIMLMVTAFFGXXX), 170–190 (XXXXXXXXXXXXXXXXXXXXX), 218–238 (YKDLLMLSLMVLMLLMTVSFL), 280–300 (LGGALALAMSIMILLTVPFTH), 312–332 (IMQLMFWTLVATFMVITWAAT), and 339–358 (FTMISQIASTIYFLFFIMNP). Heme b-binding residues include His75 and His89. Heme b is bound by residues Xaa174 and Xaa188.

This sequence belongs to the cytochrome b family. In terms of assembly, the cytochrome bc1 complex contains 3 respiratory subunits (MT-CYB, CYC1 and UQCRFS1), 2 core proteins (UQCRC1 and UQCRC2) and probably 6 low-molecular weight proteins. The cofactor is heme b.

It localises to the mitochondrion inner membrane. Component of the ubiquinol-cytochrome c reductase complex (complex III or cytochrome b-c1 complex) that is part of the mitochondrial respiratory chain. The b-c1 complex mediates electron transfer from ubiquinol to cytochrome c. Contributes to the generation of a proton gradient across the mitochondrial membrane that is then used for ATP synthesis. The chain is Cytochrome b (MT-CYB) from Eryx tataricus (Tartar sand boa).